A 147-amino-acid chain; its full sequence is Secreted hemophore CSA2 (147 aa).

Residues 1–20 form the signal peptide; it reads MKFSTILAIPFAIAFANAAA. The 112-residue stretch at 34-145 folds into the CFEM domain; sequence NPYTIYPPVP…SALDAAATAT (112 aa). 4 cysteine pairs are disulfide-bonded: Cys-62–Cys-102, Cys-66–Cys-97, Cys-76–Cys-83, and Cys-85–Cys-118. Residue Asp-80 coordinates heme.

This sequence belongs to the RBT5 family. In terms of assembly, homodimer. The possibility of a transient honotrimer assembly of the holo protein is not ruled out.

Its subcellular location is the secreted. In terms of biological role, secreted heme-binding protein involved in the utilization of iron from human hemoglobin during hyphal growth. May also play a role in non-hemoglobin iron utilization. Heme transfer occurs between PGA7, RBT5 and CSA2 supporting a model in which the 3 CFEM proteins cooperate in a heme-acquisition system and form a cross-cell wall heme-transfer cascade. The ability to acquire iron from host tissues is a major virulence factor of pathogenic microorganisms. The polypeptide is Secreted hemophore CSA2 (CSA2) (Candida albicans (strain SC5314 / ATCC MYA-2876) (Yeast)).